A 220-amino-acid polypeptide reads, in one-letter code: UPF0319 protein YccT (220 aa).

Residues 1 to 20 (MKTGALTTFLALCLPVTVFA) form the signal peptide.

This sequence belongs to the UPF0319 family.

The polypeptide is UPF0319 protein YccT (Salmonella schwarzengrund (strain CVM19633)).